The sequence spans 82 residues: Defensin-like protein 22 (82 aa).

The signal sequence occupies residues 1–24; it reads MAGLKVFSFALLLILTFSLIDVEG. Disulfide bonds link Cys-34–Cys-82, Cys-44–Cys-69, Cys-53–Cys-78, and Cys-57–Cys-80.

It belongs to the DEFL family.

The protein resides in the secreted. The protein is Defensin-like protein 22 of Arabidopsis thaliana (Mouse-ear cress).